A 333-amino-acid chain; its full sequence is Probable G-protein coupled receptor 33 (333 aa).

The Extracellular portion of the chain corresponds to 1-30 (MDLINSTDYLINASTLVRNSTQFLAPASKM). N-linked (GlcNAc...) asparagine glycosylation is found at N5, N12, and N19. Residues 31–53 (IIALSLYISSIIGTITNGLYLWV) form a helical membrane-spanning segment. Residues 54–64 (LRFKMKQTVNT) lie on the Cytoplasmic side of the membrane. The chain crosses the membrane as a helical span at residues 65 to 86 (LLFFHLILSYFISTMILPFMAT). The Extracellular segment spans residues 87–103 (SQLQDNHWNFGTALCKV). Residues C101 and C179 are joined by a disulfide bond. A helical membrane pass occupies residues 104–124 (FNGTLSLGMFTSVFFLSAIGL). Residues 125 to 143 (DRYLLTLHPVWSQQHRTPR) are Cytoplasmic-facing. A helical membrane pass occupies residues 144–165 (WASSIVLGVWISAAALSIPYLI). Residues 166-209 (FRQTHHDRKGKVTCQNNYAVSTNWESKEMQALRQWIHVACFISR) lie on the Extracellular side of the membrane. A helical transmembrane segment spans residues 210 to 230 (FLLGFLLPFFIIIFCYERVAS). Residues 231 to 246 (KVKERSLFKSSKPFKV) lie on the Cytoplasmic side of the membrane. A helical transmembrane segment spans residues 247–268 (MMTAIISFFVCWMPYHIHQGLL). At 269 to 283 (LTTNQSLLLELTLIL) the chain is on the extracellular side. An N-linked (GlcNAc...) asparagine glycan is attached at N272. A helical membrane pass occupies residues 284–303 (TVLTTSFNTIFSPTLYLFVG). At 304 to 333 (ENFKKVFKKSILALFESTFSEDSSVERTQT) the chain is on the cytoplasmic side.

The protein belongs to the G-protein coupled receptor 1 family.

The protein resides in the cell membrane. Orphan receptor; could be a chemoattractant receptor. This is Probable G-protein coupled receptor 33 (GPR33) from Pan troglodytes (Chimpanzee).